We begin with the raw amino-acid sequence, 117 residues long: Large ribosomal subunit protein uL18 (117 aa).

Belongs to the universal ribosomal protein uL18 family. Part of the 50S ribosomal subunit; part of the 5S rRNA/L5/L18/L25 subcomplex. Contacts the 5S and 23S rRNAs.

In terms of biological role, this is one of the proteins that bind and probably mediate the attachment of the 5S RNA into the large ribosomal subunit, where it forms part of the central protuberance. This chain is Large ribosomal subunit protein uL18, found in Mannheimia succiniciproducens (strain KCTC 0769BP / MBEL55E).